Consider the following 389-residue polypeptide: Phenylpropanoylacetyl-CoA synthase (389 aa).

Residue cysteine 163 is part of the active site.

The protein belongs to the thiolase-like superfamily. Chalcone/stilbene synthases family. In terms of assembly, homodimer. In terms of tissue distribution, expressed in both the leaf and rhizome, with higher expression in the rhizome.

It carries out the reaction (E)-feruloyl-CoA + malonyl-CoA + H(+) = (E)-feruloylacetyl-CoA + CO2 + CoA. It catalyses the reaction 4-coumaroyl-CoA + malonyl-CoA + H(+) = (4-coumaroyl)acetyl-CoA + CO2 + CoA. The protein operates within secondary metabolite biosynthesis; flavonoid biosynthesis. Functionally, catalyzes the formation of feruloyldiketide-CoA by condensing feruloyl-CoA and malonyl-CoA in the curcuminoid biosynthesis. Has no activity with cinnamoyl-CoA. In Curcuma longa (Turmeric), this protein is Phenylpropanoylacetyl-CoA synthase (DCS).